Reading from the N-terminus, the 309-residue chain is Protein FdhE (309 aa).

Belongs to the FdhE family.

The protein resides in the cytoplasm. Its function is as follows. Necessary for formate dehydrogenase activity. The chain is Protein FdhE from Escherichia coli O127:H6 (strain E2348/69 / EPEC).